A 325-amino-acid chain; its full sequence is MVFASLEHILTHISFSVVSILISIHLITLLFVKEIIGLSDSSKKGMIITFFCITGLLVTRWVFSGHLPFSDLYESLIFLSWTFSIFYMVPYFKKSKNYYLNTIITPSVIFTQGFATSGLLTKMHESLILVPALQSHWLMMHVSMMILGYATLLCGSLLSVAILVITFQELIQIIGKSKNFYFLNESFSFAEIKYMNMTDKNNVLQKTSFLSYRNYYRSQFLQQLDRWGYRTISLGFIFLTIGIISGAVWANEAWGSYWNWDPKETWAFITWTIFAIYLHTRKNKKLEDLNSSIVASIGFLIIWVCYLGINLLGIGLHSYGSFTPN.

8 helical membrane passes run 12–32 (HISF…LLFV), 45–65 (GMII…VFSG), 72–92 (LYES…VPYF), 100–120 (LNTI…SGLL), 145–165 (MILG…ILVI), 231–251 (TISL…VWAN), 264–281 (ETWA…LHTR), and 293–313 (IVAS…NLLG).

This sequence belongs to the CcmF/CycK/Ccl1/NrfE/CcsA family. As to quaternary structure, may interact with Ccs1.

The protein localises to the plastid. It localises to the chloroplast thylakoid membrane. Functionally, required during biogenesis of c-type cytochromes (cytochrome c6 and cytochrome f) at the step of heme attachment. This is Cytochrome c biogenesis protein CcsA from Glycine max (Soybean).